The sequence spans 195 residues: Thymidine kinase (195 aa).

ATP contacts are provided by residues 15-22 (GSMFSGKS) and 88-91 (DEVQ). Glu89 functions as the Proton acceptor in the catalytic mechanism. Positions 145, 148, 183, and 186 each coordinate Zn(2+).

The protein belongs to the thymidine kinase family. As to quaternary structure, homotetramer.

The protein localises to the cytoplasm. The enzyme catalyses thymidine + ATP = dTMP + ADP + H(+). In Bacillus cereus (strain 03BB102), this protein is Thymidine kinase.